The sequence spans 286 residues: Shikimate dehydrogenase (NADP(+)) (286 aa).

Shikimate-binding positions include 19–21 and Thr66; that span reads SVS. Lys70 (proton acceptor) is an active-site residue. 2 residues coordinate shikimate: Asn91 and Asp106. Residues 130–134 and Ala225 each bind NADP(+); that span reads GAGGS. Tyr227 is a binding site for shikimate. Gly248 contacts NADP(+).

This sequence belongs to the shikimate dehydrogenase family. Homodimer.

It carries out the reaction shikimate + NADP(+) = 3-dehydroshikimate + NADPH + H(+). Its pathway is metabolic intermediate biosynthesis; chorismate biosynthesis; chorismate from D-erythrose 4-phosphate and phosphoenolpyruvate: step 4/7. Involved in the biosynthesis of the chorismate, which leads to the biosynthesis of aromatic amino acids. Catalyzes the reversible NADPH linked reduction of 3-dehydroshikimate (DHSA) to yield shikimate (SA). In Dehalococcoides mccartyi (strain ATCC BAA-2266 / KCTC 15142 / 195) (Dehalococcoides ethenogenes (strain 195)), this protein is Shikimate dehydrogenase (NADP(+)).